The primary structure comprises 303 residues: ATP synthase subunit a (303 aa).

The next 6 membrane-spanning stretches (helical) occupy residues 59-79 (HTVM…IWGN), 122-142 (FLLT…VPWM), 148-168 (NLAV…VAGI), 181-201 (TGGV…LGLF), 220-240 (IVYF…VAAV), and 244-264 (FAFA…YVFA). The span at 281–290 (HDDHGHDHPE) shows a compositional bias: basic and acidic residues. The segment at 281–303 (HDDHGHDHPEAGPSHDQGKAHHA) is disordered.

This sequence belongs to the ATPase A chain family. F-type ATPases have 2 components, CF(1) - the catalytic core - and CF(0) - the membrane proton channel. CF(1) has five subunits: alpha(3), beta(3), gamma(1), delta(1), epsilon(1). CF(0) has three main subunits: a(1), b(2) and c(9-12). The alpha and beta chains form an alternating ring which encloses part of the gamma chain. CF(1) is attached to CF(0) by a central stalk formed by the gamma and epsilon chains, while a peripheral stalk is formed by the delta and b chains.

The protein resides in the cell inner membrane. Key component of the proton channel; it plays a direct role in the translocation of protons across the membrane. In Myxococcus xanthus (strain DK1622), this protein is ATP synthase subunit a.